A 302-amino-acid chain; its full sequence is Sulfate adenylyltransferase subunit 2 (302 aa).

Belongs to the PAPS reductase family. CysD subfamily. In terms of assembly, heterodimer composed of CysD, the smaller subunit, and CysN.

The catalysed reaction is sulfate + ATP + H(+) = adenosine 5'-phosphosulfate + diphosphate. The protein operates within sulfur metabolism; hydrogen sulfide biosynthesis; sulfite from sulfate: step 1/3. With CysN forms the ATP sulfurylase (ATPS) that catalyzes the adenylation of sulfate producing adenosine 5'-phosphosulfate (APS) and diphosphate, the first enzymatic step in sulfur assimilation pathway. APS synthesis involves the formation of a high-energy phosphoric-sulfuric acid anhydride bond driven by GTP hydrolysis by CysN coupled to ATP hydrolysis by CysD. This chain is Sulfate adenylyltransferase subunit 2, found in Yersinia enterocolitica serotype O:8 / biotype 1B (strain NCTC 13174 / 8081).